The chain runs to 345 residues: Prenyltransferase ltmC (345 aa).

H112 contributes to the substrate binding site. Mg(2+) contacts are provided by D119 and D123. R128 is a binding site for substrate. N130 is a glycosylation site (N-linked (GlcNAc...) asparagine). The substrate site is built by K212, T213, Q243, N250, and K260.

Belongs to the FPP/GGPP synthase family. Requires Mg(2+) as cofactor.

Its pathway is secondary metabolite biosynthesis. In terms of biological role, prenyltransferase; part of the gene cluster that mediates the biosynthesis of lolitrems, indole-diterpene mycotoxins that are potent tremorgens in mammals, and are synthesized by clavicipitaceous fungal endophytes in association with their grass hosts. The geranylgeranyl diphosphate (GGPP) synthase ltmG is proposed to catalyze the first step in lolitrem biosynthesis. LtmG catalyzes a series of iterative condensations of isopentenyl diphosphate (IPP) with dimethylallyl diphosphate (DMAPP), geranyl diphosphate (GPP), and farnesyl diphosphate (FPP), to form GGPP. GGPP then condenses with indole-3-glycerol phosphate to form 3-geranylgeranylindole, an acyclic intermediate, to be incorporated into paxilline. Either ltmG or ltmC could be responsible for this step, as both are putative prenyl transferases. The FAD-dependent monooxygenase ltmM then catalyzes the epoxidation of the two terminal alkenes of the geranylgeranyl moiety, which is subsequently cyclized by ltmB, to paspaline. The cytochrome P450 monooxygenases ltmQ and ltmP can sequentially oxidize paspaline to terpendole E and terpendole F. Alternatively, ltmP converts paspaline to an intermediate which is oxidized by ltmQ to terpendole F. LtmF, ltmK, ltmE and ltmJ appear to be unique to the epichloe endophytes. The prenyltransferase ltmF is involved in the 27-hydroxyl-O-prenylation. The cytochrome P450 monooxygenase ltmK is required for the oxidative acetal ring formation. The multi-functional prenyltransferase ltmE is required for C20- and C21-prenylations of the indole ring of paspalanes and acts together with the cytochrome P450 monooxygenase ltmJ to yield lolitremanes by multiple oxidations and ring closures. The stereoisomer pairs of lolitriol and lolitrem N or lolitrem B and lolitrem F may be attributed to variations in the way in which ring closure can occur under the action of ltmJ. While the major product of this pathway is lolitrem B, the prenyl transferases and cytochrome P450 monooxygenases identified in this pathway have a remarkable versatility in their regio- and stereo-specificities to generate a diverse range of metabolites that are products of a metabolic grid rather than a linear pathway. The protein is Prenyltransferase ltmC of Epichloe festucae var. lolii (Neotyphodium lolii).